We begin with the raw amino-acid sequence, 103 residues long: L-rhamnose mutarotase (103 aa).

Position 18 (Tyr-18) interacts with substrate. His-22 (proton donor) is an active-site residue. Substrate-binding positions include Tyr-41 and 76-77; that span reads WW.

The protein belongs to the rhamnose mutarotase family. In terms of assembly, homodimer.

The protein localises to the cytoplasm. The catalysed reaction is alpha-L-rhamnose = beta-L-rhamnose. It participates in carbohydrate metabolism; L-rhamnose metabolism. In terms of biological role, involved in the anomeric conversion of L-rhamnose. The sequence is that of L-rhamnose mutarotase from Enterococcus faecalis (strain ATCC 700802 / V583).